The following is a 298-amino-acid chain: Cyclin-D4-2 (298 aa).

The protein belongs to the cyclin family. Cyclin D subfamily. Interacts with CDKA-1 to form a kinase complex.

In terms of biological role, may promote cell division. This chain is Cyclin-D4-2 (CYCD4-2), found in Arabidopsis thaliana (Mouse-ear cress).